A 46-amino-acid polypeptide reads, in one-letter code: Protein YpdJ (46 aa).

In terms of biological role, may be involved in H(2) production during fermentative growth. The chain is Protein YpdJ (ypdJ) from Escherichia coli (strain K12).